The primary structure comprises 381 residues: Mannitol-1-phosphate 5-dehydrogenase (381 aa).

Residue 3-14 (AVHFGAGNIGRG) coordinates NAD(+).

This sequence belongs to the mannitol dehydrogenase family.

The enzyme catalyses D-mannitol 1-phosphate + NAD(+) = beta-D-fructose 6-phosphate + NADH + H(+). The sequence is that of Mannitol-1-phosphate 5-dehydrogenase from Photobacterium profundum (strain SS9).